The sequence spans 247 residues: MAAAIASGLIRQKRQAREQHWDRPSASRRRSSPSKNRGLCNGNLVDIFSKVRIFGLKKRRLRRQDPQLKGIVTRLYCRQGYYLQMHPDGALDGTKDDSTNSTLFNLIPVGLRVVAIQGVKTGLYIAMNGEGYLYPSELFTPECKFKESVFENYYVIYSSMLYRQQESGRAWFLGLNKEGQVMKGNRVKKTKPAAHFLPKPLEVAMYREPSLHDVGETVPKAGVTPSKSTSASAIMNGGKPVNKCKTT.

Disordered regions lie at residues 1–38 and 216–247; these read MAAA…KNRG and ETVP…CKTT. The segment covering 15–25 has biased composition (basic and acidic residues); that stretch reads QAREQHWDRPS.

The protein belongs to the heparin-binding growth factors family. As to quaternary structure, interacts with SCN8A.

The protein localises to the nucleus. Its function is as follows. Probably involved in nervous system development and function. In Rattus norvegicus (Rat), this protein is Fibroblast growth factor 14 (Fgf14).